The following is a 131-amino-acid chain: Profilin-2 (131 aa).

The protein belongs to the profilin family. In terms of assembly, occurs in many kinds of cells as a complex with monomeric actin in a 1:1 ratio.

The protein localises to the cytoplasm. It localises to the cytoskeleton. In terms of biological role, binds to actin and affects the structure of the cytoskeleton. At high concentrations, profilin prevents the polymerization of actin, whereas it enhances it at low concentrations. By binding to PIP2, it inhibits the formation of IP3 and DG. The chain is Profilin-2 from Malus domestica (Apple).